Consider the following 319-residue polypeptide: 1-aminocyclopropane-1-carboxylate oxidase 4 (319 aa).

Residues 153–253 form the Fe2OG dioxygenase domain; sequence PNFGTKVSNY…RMSLASFYNP (101 aa). Fe cation is bound by residues histidine 177, aspartate 179, and histidine 234.

Belongs to the iron/ascorbate-dependent oxidoreductase family. Fe cation is required as a cofactor.

The enzyme catalyses 1-aminocyclopropane-1-carboxylate + L-ascorbate + O2 = ethene + L-dehydroascorbate + hydrogen cyanide + CO2 + 2 H2O. Its pathway is alkene biosynthesis; ethylene biosynthesis via S-adenosyl-L-methionine; ethylene from S-adenosyl-L-methionine: step 2/2. The polypeptide is 1-aminocyclopropane-1-carboxylate oxidase 4 (ACO4) (Petunia hybrida (Petunia)).